Reading from the N-terminus, the 49-residue chain is Large ribosomal subunit protein bL33A (49 aa).

Belongs to the bacterial ribosomal protein bL33 family.

This Lactobacillus johnsonii (strain CNCM I-12250 / La1 / NCC 533) protein is Large ribosomal subunit protein bL33A.